A 630-amino-acid polypeptide reads, in one-letter code: Alpha-1,4-glucan:maltose-1-phosphate maltosyltransferase (630 aa).

Residues Arg-234, Gln-294, and Asp-329 each contribute to the alpha-maltose 1-phosphate site. Asp-365 functions as the Nucleophile in the catalytic mechanism. Residue Asn-366 participates in alpha-maltose 1-phosphate binding. Residue Glu-394 is the Proton donor of the active site. 504–505 lines the alpha-maltose 1-phosphate pocket; the sequence is KY.

This sequence belongs to the glycosyl hydrolase 13 family. GlgE subfamily. As to quaternary structure, homodimer.

It carries out the reaction alpha-maltose 1-phosphate + [(1-&gt;4)-alpha-D-glucosyl](n) = [(1-&gt;4)-alpha-D-glucosyl](n+2) + phosphate. Functionally, maltosyltransferase that uses maltose 1-phosphate (M1P) as the sugar donor to elongate linear or branched alpha-(1-&gt;4)-glucans. Is involved in a branched alpha-glucan biosynthetic pathway from trehalose, together with TreS, Mak and GlgB. The sequence is that of Alpha-1,4-glucan:maltose-1-phosphate maltosyltransferase from Picrophilus torridus (strain ATCC 700027 / DSM 9790 / JCM 10055 / NBRC 100828 / KAW 2/3).